The primary structure comprises 381 residues: Diguanylate cyclase DosC (381 aa).

H98 is a heme binding site. The region spanning 325 to 381 (TPLSVLIIDVDKFKEINDTWGHNTGDEILRKVSFLSQKRLVKSKILGAGSSRKLAVS) is the GGDEF domain. Residue D333 participates in Mg(2+) binding. 2 residues coordinate substrate: N341 and D350.

It depends on heme as a cofactor. Requires Mg(2+) as cofactor.

The enzyme catalyses 2 GTP = 3',3'-c-di-GMP + 2 diphosphate. Its pathway is purine metabolism; 3',5'-cyclic di-GMP biosynthesis. Globin-coupled heme-based oxygen sensor protein displaying diguanylate cyclase (DGC) activity in response to oxygen availability. Thus, catalyzes the synthesis of cyclic diguanylate (c-di-GMP) via the condensation of 2 GTP molecules. Cyclic-di-GMP is a second messenger which controls cell surface-associated traits in bacteria. This is Diguanylate cyclase DosC (dosC) from Shigella flexneri serotype 5b (strain 8401).